The following is a 287-amino-acid chain: ATP synthase gamma chain (287 aa).

The protein belongs to the ATPase gamma chain family. In terms of assembly, F-type ATPases have 2 components, CF(1) - the catalytic core - and CF(0) - the membrane proton channel. CF(1) has five subunits: alpha(3), beta(3), gamma(1), delta(1), epsilon(1). CF(0) has three main subunits: a, b and c.

It localises to the cell membrane. Produces ATP from ADP in the presence of a proton gradient across the membrane. The gamma chain is believed to be important in regulating ATPase activity and the flow of protons through the CF(0) complex. In Bacillus velezensis (strain DSM 23117 / BGSC 10A6 / LMG 26770 / FZB42) (Bacillus amyloliquefaciens subsp. plantarum), this protein is ATP synthase gamma chain.